A 556-amino-acid polypeptide reads, in one-letter code: Potassium-transporting ATPase potassium-binding subunit (556 aa).

10 helical membrane-spanning segments follow: residues 6-26 (AGIL…VPLG), 65-85 (SVLA…LLQG), 133-153 (GLSV…MAFV), 176-196 (LRIL…GGVI), 249-269 (PTTW…FSLP), 283-303 (AAIL…MMLF), 378-398 (GLYS…LMVG), 419-439 (YFLV…ALPG), 483-503 (ALGL…LALA), and 526-546 (FVGM…LPVL).

Belongs to the KdpA family. The system is composed of three essential subunits: KdpA, KdpB and KdpC.

The protein resides in the cell membrane. Functionally, part of the high-affinity ATP-driven potassium transport (or Kdp) system, which catalyzes the hydrolysis of ATP coupled with the electrogenic transport of potassium into the cytoplasm. This subunit binds the extracellular potassium ions and delivers the ions to the membrane domain of KdpB through an intramembrane tunnel. The protein is Potassium-transporting ATPase potassium-binding subunit of Mycobacterium sp. (strain KMS).